The primary structure comprises 118 residues: D-dopachrome decarboxylase (118 aa).

Residue Pro2 is modified to N-acetylproline. Lys33 carries the post-translational modification N6-acetyllysine.

It belongs to the MIF family. Homotrimer. In terms of tissue distribution, highly expressed in the liver and at lower levels in the heart, lung and pancreas.

It is found in the cytoplasm. The enzyme catalyses D-dopachrome + H(+) = 5,6-dihydroxyindole + CO2. In terms of biological role, tautomerization of D-dopachrome with decarboxylation to give 5,6-dihydroxyindole (DHI). The protein is D-dopachrome decarboxylase (DDT) of Homo sapiens (Human).